The chain runs to 1052 residues: Ubiquitin-like modifier-activating enzyme 6 (1052 aa).

Residue methionine 1 is modified to N-acetylmethionine. The interval 1–21 (MEGSEPVAAHQGEEASCSSWG) is disordered. Arginine 46 lines the ATP pocket. At threonine 54 the chain carries Phosphothreonine. Residue serine 301 is modified to Phosphoserine. ATP contacts are provided by alanine 470 and aspartate 497. Residues aspartate 499 and glutamate 502 each coordinate Mg(2+). Positions 505, 508, 509, and 521 each coordinate ATP. Lysine 544 is modified (N6-acetyllysine). Position 545 (valine 545) interacts with ATP. Aspartate 569 provides a ligand contact to Mg(2+). Asparagine 570 contributes to the ATP binding site. Cysteine 625 acts as the Glycyl thioester intermediate in catalysis. Lysine 729 carries the N6-acetyllysine modification. Phosphoserine is present on serine 737.

It belongs to the ubiquitin-activating E1 family. Forms a thioester with UBD in cells stimulated with tumor necrosis factor-alpha (TNFa) and interferon-gamma (IFNg). In terms of tissue distribution, widely expressed. Isoform 2 is predominantly expressed in testis with higher expression in adult testis than in fetal testis.

It catalyses the reaction ATP + ubiquitin + [E1 ubiquitin-activating enzyme]-L-cysteine = AMP + diphosphate + S-ubiquitinyl-[E1 ubiquitin-activating enzyme]-L-cysteine.. It functions in the pathway protein modification; protein ubiquitination. Functionally, activates ubiquitin by first adenylating its C-terminal glycine residue with ATP, and thereafter linking this residue to the side chain of a cysteine residue in E1, yielding a ubiquitin-E1 thioester and free AMP. Specific for ubiquitin, does not activate ubiquitin-like peptides. Also activates UBD/FAT10 conjugation via adenylation of its C-terminal glycine. Differs from UBE1 in its specificity for substrate E2 charging. Does not charge cell cycle E2s, such as CDC34. Essential for embryonic development. Isoform 2 may play a key role in ubiquitin system and may influence spermatogenesis and male fertility. This is Ubiquitin-like modifier-activating enzyme 6 (UBA6) from Homo sapiens (Human).